Reading from the N-terminus, the 331-residue chain is MPKAKISALGCYTPPRVLTNQDLEKLVDTNDQWIMERTGIRERHIAAPEMATSDMAIEAARCALLQRGIDACEIDAIILCTVTPDHLFPSTACLVQNAIGAKGAWGFDLIAACSGFLYGLTTGAHFVMAGTHKKVLVIGSDTMSRIIDYTDRATCVLFGDGAGAMLIEATDEADDGTGFIDFLGEIDGSGGEFLRMPAGGSRRPASHETVDQRMHYVHQEGSQVFKYASRKMYEVCRDLLERNHFKVEDVGLMIPHQANKRIIKAAGDRLGIAPERVMINIERYGNTTAGTLPLATRDAISEGRLKKGDLVLFAAVGAGYTVGASLWRWAF.

Residues Cys113 and His256 contribute to the active site. Positions 257-261 (QANKR) are ACP-binding. Asn286 is a catalytic residue.

The protein belongs to the thiolase-like superfamily. FabH family. Homodimer.

The protein localises to the cytoplasm. It carries out the reaction malonyl-[ACP] + acetyl-CoA + H(+) = 3-oxobutanoyl-[ACP] + CO2 + CoA. It participates in lipid metabolism; fatty acid biosynthesis. Functionally, catalyzes the condensation reaction of fatty acid synthesis by the addition to an acyl acceptor of two carbons from malonyl-ACP. Catalyzes the first condensation reaction which initiates fatty acid synthesis and may therefore play a role in governing the total rate of fatty acid production. Possesses both acetoacetyl-ACP synthase and acetyl transacylase activities. Its substrate specificity determines the biosynthesis of branched-chain and/or straight-chain of fatty acids. The chain is Beta-ketoacyl-[acyl-carrier-protein] synthase III from Solibacter usitatus (strain Ellin6076).